A 63-amino-acid chain; its full sequence is UPF0337 protein RA1131 (63 aa).

Positions 1 to 63 (MGSAKDKVAG…DAVKGAVDKT (63 aa)) are disordered. Residues 34-49 (AKGAAQEAKGGAQQAK) are compositionally biased toward low complexity. The segment covering 51–63 (KLKDAVKGAVDKT) has biased composition (basic and acidic residues).

The protein belongs to the UPF0337 (CsbD) family.

In Rhizobium meliloti (strain 1021) (Ensifer meliloti), this protein is UPF0337 protein RA1131.